A 128-amino-acid chain; its full sequence is Adrenodoxin (128 aa).

The residue at position 3 (Ser-3) is a Phosphoserine. Lys-6 bears the N6-acetyllysine; alternate mark. Lys-6 carries the N6-succinyllysine; alternate modification. Residues 7–111 (VTVNFINRDG…NMTVRVPDAV (105 aa)) enclose the 2Fe-2S ferredoxin-type domain. [2Fe-2S] cluster is bound by residues Cys-46, Cys-52, Cys-55, and Cys-92. Position 98 is an N6-succinyllysine (Lys-98). Ser-117 bears the Phosphoserine mark.

Belongs to the adrenodoxin/putidaredoxin family. As to quaternary structure, interacts with CYP11A1. The cofactor is [2Fe-2S] cluster.

Its subcellular location is the mitochondrion matrix. Functionally, essential for the synthesis of various steroid hormones. Participates in the reduction of mitochondrial cytochrome P450 for steroidogenesis. Transfers electrons from adrenodoxin reductase to CYP11A1, a cytochrome P450 that catalyzes cholesterol side-chain cleavage. Does not form a ternary complex with adrenodoxin reductase and CYP11A1 but shuttles between the two enzymes to transfer electrons. This chain is Adrenodoxin (FDX1), found in Ovis aries (Sheep).